Consider the following 378-residue polypeptide: Lipoyl synthase, mitochondrial (378 aa).

[4Fe-4S] cluster-binding residues include Cys-109, Cys-114, Cys-120, Cys-140, Cys-144, Cys-147, and Ser-356. Positions 125–345 (ETGTATATIM…QTLGMEMGFR (221 aa)) constitute a Radical SAM core domain.

The protein belongs to the radical SAM superfamily. Lipoyl synthase family. The cofactor is [4Fe-4S] cluster.

It localises to the mitochondrion. It carries out the reaction [[Fe-S] cluster scaffold protein carrying a second [4Fe-4S](2+) cluster] + N(6)-octanoyl-L-lysyl-[protein] + 2 oxidized [2Fe-2S]-[ferredoxin] + 2 S-adenosyl-L-methionine + 4 H(+) = [[Fe-S] cluster scaffold protein] + N(6)-[(R)-dihydrolipoyl]-L-lysyl-[protein] + 4 Fe(3+) + 2 hydrogen sulfide + 2 5'-deoxyadenosine + 2 L-methionine + 2 reduced [2Fe-2S]-[ferredoxin]. Its pathway is protein modification; protein lipoylation via endogenous pathway; protein N(6)-(lipoyl)lysine from octanoyl-[acyl-carrier-protein]: step 2/2. Catalyzes the radical-mediated insertion of two sulfur atoms into the C-6 and C-8 positions of the octanoyl moiety bound to the lipoyl domains of lipoate-dependent enzymes, thereby converting the octanoylated domains into lipoylated derivatives. This chain is Lipoyl synthase, mitochondrial, found in Medicago truncatula (Barrel medic).